A 185-amino-acid chain; its full sequence is dCTP deaminase (185 aa).

DCTP-binding positions include 107 to 112 (KSTYAR), 131 to 133 (TLE), glutamine 152, tyrosine 166, and glutamine 176. The active-site Proton donor/acceptor is the glutamate 133.

This sequence belongs to the dCTP deaminase family. Homotrimer.

It carries out the reaction dCTP + H2O + H(+) = dUTP + NH4(+). It participates in pyrimidine metabolism; dUMP biosynthesis; dUMP from dCTP (dUTP route): step 1/2. Its function is as follows. Catalyzes the deamination of dCTP to dUTP. This chain is dCTP deaminase, found in Neorickettsia sennetsu (strain ATCC VR-367 / Miyayama) (Ehrlichia sennetsu).